Here is a 448-residue protein sequence, read N- to C-terminus: Amino-acid acetyltransferase (448 aa).

The N-acetyltransferase domain maps to 295 to 433; sequence EQIRRANIND…KQVLYNYQRR (139 aa).

It belongs to the acetyltransferase family. ArgA subfamily. In terms of assembly, homohexamer.

It is found in the cytoplasm. It catalyses the reaction L-glutamate + acetyl-CoA = N-acetyl-L-glutamate + CoA + H(+). Its pathway is amino-acid biosynthesis; L-arginine biosynthesis; N(2)-acetyl-L-ornithine from L-glutamate: step 1/4. The protein is Amino-acid acetyltransferase of Photorhabdus laumondii subsp. laumondii (strain DSM 15139 / CIP 105565 / TT01) (Photorhabdus luminescens subsp. laumondii).